Consider the following 263-residue polypeptide: uncharacterized protein (263 aa).

A run of 7 helical transmembrane segments spans residues 1–21 (MLVI…ILCQ), 38–58 (LFLL…HYCY), 82–102 (IPIS…CMMV), 118–138 (GISI…IFTY), 151–171 (GKFG…ANLL), 196–216 (FALI…VIPT), and 230–250 (FWVK…VQYV).

Its subcellular location is the membrane. This is an uncharacterized protein from Saccharomyces cerevisiae (strain ATCC 204508 / S288c) (Baker's yeast).